A 233-amino-acid chain; its full sequence is 5'-methylthioadenosine/S-adenosylhomocysteine nucleosidase (233 aa).

Catalysis depends on glutamate 12, which acts as the Proton acceptor. Residues glycine 78, isoleucine 152, and 173-174 (ME) contribute to the substrate site. Aspartate 197 serves as the catalytic Proton donor.

It belongs to the PNP/UDP phosphorylase family. MtnN subfamily. Homodimer.

The enzyme catalyses S-adenosyl-L-homocysteine + H2O = S-(5-deoxy-D-ribos-5-yl)-L-homocysteine + adenine. The catalysed reaction is S-methyl-5'-thioadenosine + H2O = 5-(methylsulfanyl)-D-ribose + adenine. It catalyses the reaction 5'-deoxyadenosine + H2O = 5-deoxy-D-ribose + adenine. It functions in the pathway amino-acid biosynthesis; L-methionine biosynthesis via salvage pathway; S-methyl-5-thio-alpha-D-ribose 1-phosphate from S-methyl-5'-thioadenosine (hydrolase route): step 1/2. Its function is as follows. Catalyzes the irreversible cleavage of the glycosidic bond in both 5'-methylthioadenosine (MTA) and S-adenosylhomocysteine (SAH/AdoHcy) to adenine and the corresponding thioribose, 5'-methylthioribose and S-ribosylhomocysteine, respectively. Also cleaves 5'-deoxyadenosine, a toxic by-product of radical S-adenosylmethionine (SAM) enzymes, into 5-deoxyribose and adenine. Thus, is required for in vivo function of the radical SAM enzymes biotin synthase and lipoic acid synthase, that are inhibited by 5'-deoxyadenosine accumulation. The chain is 5'-methylthioadenosine/S-adenosylhomocysteine nucleosidase from Sodalis glossinidius (strain morsitans).